The chain runs to 159 residues: SsrA-binding protein (159 aa).

Residues 138–153 (KREDGKDKDWSREKER) are compositionally biased toward basic and acidic residues. The interval 138 to 159 (KREDGKDKDWSREKERLMKHKA) is disordered.

The protein belongs to the SmpB family.

It localises to the cytoplasm. In terms of biological role, required for rescue of stalled ribosomes mediated by trans-translation. Binds to transfer-messenger RNA (tmRNA), required for stable association of tmRNA with ribosomes. tmRNA and SmpB together mimic tRNA shape, replacing the anticodon stem-loop with SmpB. tmRNA is encoded by the ssrA gene; the 2 termini fold to resemble tRNA(Ala) and it encodes a 'tag peptide', a short internal open reading frame. During trans-translation Ala-aminoacylated tmRNA acts like a tRNA, entering the A-site of stalled ribosomes, displacing the stalled mRNA. The ribosome then switches to translate the ORF on the tmRNA; the nascent peptide is terminated with the 'tag peptide' encoded by the tmRNA and targeted for degradation. The ribosome is freed to recommence translation, which seems to be the essential function of trans-translation. The polypeptide is SsrA-binding protein (Pseudoalteromonas translucida (strain TAC 125)).